Here is a 361-residue protein sequence, read N- to C-terminus: Transcription factor MafA (361 aa).

At S14 the chain carries Phosphoserine. Residue K32 forms a Glycyl lysine isopeptide (Lys-Gly) (interchain with G-Cter in SUMO2) linkage. Disordered stretches follow at residues 40 to 105 and 175 to 228; these read RFCH…VGGA and GGAD…AGHH. Residues 46 to 76 show a composition bias toward low complexity; sequence PPGSLSSTPLSTPCSSVPSSPSFCAPSPGTG. Residue S49 is modified to Phosphoserine. 2 positions are modified to phosphothreonine: T53 and T57. Phosphoserine is present on residues S61 and S65. The span at 183 to 211 shows a compositional bias: basic residues; sequence GHHHGAHHTAHHHHSAHHHHHHHHHHGGS. The segment covering 212 to 226 has biased composition (gly residues); sequence GHHGGGAGHGGGGAG. The tract at residues 262–287 is basic motif; it reads RLKQKRRTLKNRGYAQSCRFKRVQQR. The bZIP domain occupies 262 to 325; it reads RLKQKRRTLK…DLYKEKYEKL (64 aa). The leucine-zipper stretch occupies residues 290 to 311; it reads LESEKCQLQSQVEQLKLEVGRL. Residues 324-361 form a disordered region; sequence KLAGRGGPGGAGGAGFPREPSPAQAGPGAAKGAPDFFL. The span at 327-338 shows a compositional bias: gly residues; sequence GRGGPGGAGGAG. Residues 345-361 show a composition bias toward low complexity; the sequence is PAQAGPGAAKGAPDFFL.

This sequence belongs to the bZIP family. Forms homodimers. Monomers and dimers are able to bind DNA, but the off-rate is faster for monomers. Interacts with NEUROD1 and PDX1. May interact with MAFB, FOS, JUN and PCAF. Ubiquitinated, leading to its degradation by the proteasome. Post-translationally, phosphorylated at tyrosines.

The protein localises to the nucleus. Functionally, transcription factor that activates insulin gene expression. Acts synergistically with NEUROD1/BETA2 and PDX1. Binds the insulin enhancer C1/RIPE3b element. Binds to consensus TRE-type MARE 5'-TGCTGACTCAGCA-3' DNA sequence. In Rattus norvegicus (Rat), this protein is Transcription factor MafA (Mafa).